Reading from the N-terminus, the 159-residue chain is Transcription elongation factor GreA (159 aa).

A coiled-coil region spans residues 14-76 (VKKLEEELEY…QLENMLRNAN (63 aa)).

It belongs to the GreA/GreB family.

Necessary for efficient RNA polymerase transcription elongation past template-encoded arresting sites. The arresting sites in DNA have the property of trapping a certain fraction of elongating RNA polymerases that pass through, resulting in locked ternary complexes. Cleavage of the nascent transcript by cleavage factors such as GreA or GreB allows the resumption of elongation from the new 3'terminus. GreA releases sequences of 2 to 3 nucleotides. This chain is Transcription elongation factor GreA, found in Clostridium novyi (strain NT).